Reading from the N-terminus, the 315-residue chain is Methylglutaconyl-CoA hydratase, mitochondrial (315 aa).

The transit peptide at 1 to 43 (MAAAAAPGALGALSAGRVRLVAACCARLGSAAWARGTAPRRGY) directs the protein to the mitochondrion. The residue at position 76 (Lys-76) is an N6-acetyllysine; alternate. Lys-76 is subject to N6-succinyllysine; alternate. An RNA-binding region spans residues 81-95 (KNLLKMLSKAVDALK). An N6-succinyllysine modification is found at Lys-85. An N6-acetyllysine; alternate mark is found at Lys-89 and Lys-120. N6-succinyllysine; alternate occurs at positions 89 and 120. Residues Lys-124 and Lys-136 each carry the N6-succinyllysine modification. Residues Lys-180 and Lys-187 each carry the N6-acetyllysine; alternate modification. 2 positions are modified to N6-succinyllysine; alternate: Lys-180 and Lys-187. The residue at position 305 (Lys-305) is an N6-succinyllysine.

This sequence belongs to the enoyl-CoA hydratase/isomerase family. In terms of assembly, homohexamer.

Its subcellular location is the mitochondrion. It carries out the reaction (3S)-3-hydroxy-3-methylglutaryl-CoA = 3-methyl-(2E)-glutaconyl-CoA + H2O. It catalyses the reaction (3S)-citramalyl-CoA = itaconyl-CoA + H2O. The catalysed reaction is 3-hydroxyisovaleryl-CoA = 3-methylbut-2-enoyl-CoA + H2O. The enzyme catalyses (S)-3-hydroxyglutaryl-CoA = (2E)-glutaconyl-CoA + H2O. Its pathway is amino-acid degradation; L-leucine degradation; (S)-3-hydroxy-3-methylglutaryl-CoA from 3-isovaleryl-CoA: step 3/3. Catalyzes the fifth step in the leucine degradation pathway, the reversible hydration of 3-methylglutaconyl-CoA (3-MG-CoA) to 3-hydroxy-3-methylglutaryl-CoA (HMG-CoA). Can catalyze the reverse reaction but at a much lower rate in vitro. HMG-CoA is then quickly degraded by another enzyme (such as HMG-CoA lyase) to give acetyl-CoA and acetoacetate. Uses other substrates such as (2E)-glutaconyl-CoA efficiently in vitro, and to a lesser extent 3-methylcrotonyl-CoA (3-methyl-(2E)-butenoyl-CoA), crotonyl-CoA ((2E)-butenoyl-CoA) and 3-hydroxybutanoyl-CoA (the missing carboxylate reduces affinity to the active site). Originally it was identified as an RNA-binding protein as it binds to AU-rich elements (AREs) in vitro. AREs direct rapid RNA degradation and mRNA deadenylation. Might have itaconyl-CoA hydratase activity, converting itaconyl-CoA into citramalyl-CoA in the C5-dicarboxylate catabolism pathway. The C5-dicarboxylate catabolism pathway is required to detoxify itaconate, an antimicrobial metabolite and immunomodulator produced by macrophages during certain infections, that can act as a vitamin B12-poisoning metabolite. In Rattus norvegicus (Rat), this protein is Methylglutaconyl-CoA hydratase, mitochondrial.